Consider the following 656-residue polypeptide: tRNA(Met) cytidine acetyltransferase TmcA (656 aa).

Residues Gln145, 167–176, and Arg291 each bind ATP; that span reads GRGKSALLGM. The region spanning 368-542 is the N-acetyltransferase domain; it reads SEGKYNRQFF…SGCYSAIALK (175 aa). Acetyl-CoA contacts are provided by residues 474-476, 481-487, and Glu510; these read IAV and QQKGIGQ.

This sequence belongs to the RNA cytidine acetyltransferase family. TmcA subfamily.

Its subcellular location is the cytoplasm. The enzyme catalyses cytidine(34) in elongator tRNA(Met) + acetyl-CoA + ATP + H2O = N(4)-acetylcytidine(34) in elongator tRNA(Met) + ADP + phosphate + CoA + H(+). Functionally, catalyzes the formation of N(4)-acetylcytidine (ac(4)C) at the wobble position of tRNA(Met), by using acetyl-CoA as an acetyl donor and ATP (or GTP). The chain is tRNA(Met) cytidine acetyltransferase TmcA from Haemophilus influenzae (strain ATCC 51907 / DSM 11121 / KW20 / Rd).